The following is a 319-amino-acid chain: Biotin synthase (319 aa).

Residues 44-273 (IHGDGIDLCS…EAKIRLAGGR (230 aa)) enclose the Radical SAM core domain. C62, C66, and C69 together coordinate [4Fe-4S] cluster. S106, C138, C198, and R268 together coordinate [2Fe-2S] cluster.

The protein belongs to the radical SAM superfamily. Biotin synthase family. As to quaternary structure, homodimer. [4Fe-4S] cluster is required as a cofactor. [2Fe-2S] cluster serves as cofactor.

It catalyses the reaction (4R,5S)-dethiobiotin + (sulfur carrier)-SH + 2 reduced [2Fe-2S]-[ferredoxin] + 2 S-adenosyl-L-methionine = (sulfur carrier)-H + biotin + 2 5'-deoxyadenosine + 2 L-methionine + 2 oxidized [2Fe-2S]-[ferredoxin]. Its pathway is cofactor biosynthesis; biotin biosynthesis; biotin from 7,8-diaminononanoate: step 2/2. Its function is as follows. Catalyzes the conversion of dethiobiotin (DTB) to biotin by the insertion of a sulfur atom into dethiobiotin via a radical-based mechanism. The chain is Biotin synthase from Clostridium perfringens (strain 13 / Type A).